Reading from the N-terminus, the 270-residue chain is Aliphatic sulfonates import ATP-binding protein SsuB (270 aa).

The 222-residue stretch at 17–238 folds into the ABC transporter domain; that stretch reads LASSGLRKTF…ARGSHRLAAL (222 aa). Residue 49–56 participates in ATP binding; sequence GRSGCGKS. Positions 249 to 270 are disordered; that stretch reads APGAAPEPDPVAPLPTQLRWAH.

This sequence belongs to the ABC transporter superfamily. Aliphatic sulfonates importer (TC 3.A.1.17.2) family. In terms of assembly, the complex is composed of two ATP-binding proteins (SsuB), two transmembrane proteins (SsuC) and a solute-binding protein (SsuA).

The protein resides in the cell inner membrane. It catalyses the reaction ATP + H2O + aliphatic sulfonate-[sulfonate-binding protein]Side 1 = ADP + phosphate + aliphatic sulfonateSide 2 + [sulfonate-binding protein]Side 1.. In terms of biological role, part of the ABC transporter complex SsuABC involved in aliphatic sulfonates import. Responsible for energy coupling to the transport system. The sequence is that of Aliphatic sulfonates import ATP-binding protein SsuB from Pseudomonas putida (Arthrobacter siderocapsulatus).